The sequence spans 1557 residues: MAGSCTIDEHNHFGPIVGDACYGGLDFTLYFEEAFLSIFPAATLILAATVRCFLVRSASLKVRGGWLHTLKLLLLAPYSISQLLLLAFWMRSGTPKTDLTIASTVLRFIATLPCGYLIHLQHHRSLRPSKIISIYFLLTLLFDIPLARTIWTIQGLRTVSAIFIAGTVVKALLLILETWEKRRLVRPMYASPAPEDWTGVINRSLFWWINPLLFRGARTSLSVGDLFHLESCMLPDPDGKHRVVMHWENVTNKDKAGAMVVPIAKAFKWDLLAGVFPRLCQSGFIISQPFLVRATVELFVYRDRPDSRSKATLLIGAYALVYGGIAIATATAQHKTYRVITMMRAALVDMIFEKSTAINAHKNDDSAALTLMSTDIERITHCGRYIHDTWASLIEIGIALYLLYNELDTAGIAPIIIAFGCTVTAMKIAMMAGERQNLWIEAIQKRVAITAEMLGSMKGVKISGLTDLLFNKIQALREHEILASQKFRSLLIAVVGLSNFNTLMTPIVSFTIYAMGSGDAPNEILGSARALTSLTLFNLFAVFIGTLVESISETAMALECLDRIRNYLAQEAHQDPREVNSSPVTEKTPCIEAFEVDVGWKNGDESILHRLSYRIERHSLTMIVGAVGCGKTTLVKAMLGEVNCLTGKMKVNCDRMAYCGQDAWLTNGSIRENILGGSPYDPPWYSTVVAACGLEKDFTELTAGDQTAVGSKGVSLSGGQKQRLGSLDVLTRAQALARALYSGVETILLDDALSGLDPVTDEHIFTQVLGPNGLARKQHLTVVMVTHAVHRLPYADHIIALNTDGTILVQGTFDDCCKRLDYIQGFAIAQPPAIQMKSAMPKAVEVTKAAPYSDEAISDARRSSDYQTYLYYLTTVPWHNWLVYFGLMAIFVFLQAFPTVWVTWWARDNDAQPNKNRSMRIGVYWMFGVLGACFLLATACFYMLKIVAKTASVIHSRLLRTVVNAPMSFFASTDSGTTLNRFSQDLELIDMELPLAVLQTCLALFLCVAQLIIIAVSARYITATIPLCVLVYCIIGTFYMRTSRQLRIMEIEAKSPLFSNFMELLNGLITIRAFNWAEQYKLRNRALLAESQRPYYLLYAVQRWLSLVLDMTVAGFVLVLMGIAVGTMHSTNASSLGLALVNVVSLSASVKALITDWTVLETSLGAVTRVKHFAESTESEDMVQERDLPPEDWTSRGTVEYKNVSAFYRDPSKPVLKNLSFRVHKGEKVAIVGRSGSGKSTLVSALFRMIELCEGTISVDGIDITTLRRQAIRSAIIGLPQDPLLLEGSTIRENVDPFDYCPDEAVINTLKRVGLWEILESKDGLETIASPELFSHGQKQLLCMAKAMLRHGNIIVFDEATSGVDPETDEMMQELIRSCFAQHTVLTVTHRLDTIIDYDRVLVMDNGILLESDPPRTLLSRPSVFRELYKSSRGWEEYERQERAEAEARRRERVEKERAEEELRGRRGLISEKEEPETVSAIREHWNVVNQLFGGIIPRAVPRTRSRSRDHSAERRESKRYSGGDWTGEGDGDGGDGGLGRRDTRRHLTGLAARGLH.

5 helical membrane-spanning segments follow: residues 27–47 (FTLY…LILA), 70–90 (LKLL…AFWM), 99–119 (LTIA…YLIH), 131–151 (IISI…RTIW), and 159–179 (VSAI…LETW). 2 N-linked (GlcNAc...) asparagine glycosylation sites follow: Asn202 and Asn249. 6 helical membrane-spanning segments follow: residues 256–276 (AGAM…AGVF), 311–331 (ATLL…ATAT), 385–405 (YIHD…LLYN), 412–432 (IAPI…AMMA), 490–510 (LLIA…IVSF), and 531–551 (LTSL…VESI). The ABC transmembrane type-1 1 domain maps to 279-556 (LCQSGFIISQ…LVESISETAM (278 aa)). One can recognise an ABC transporter 1 domain in the interval 593-829 (AFEVDVGWKN…LDYIQGFAIA (237 aa)). Residue 625–632 (GAVGCGKT) participates in ATP binding. Asn667 carries an N-linked (GlcNAc...) asparagine glycan. A helical transmembrane segment spans residues 882–902 (LVYFGLMAIFVFLQAFPTVWV). Positions 882 to 1162 (LVYFGLMAIF…LITDWTVLET (281 aa)) constitute an ABC transmembrane type-1 2 domain. N-linked (GlcNAc...) asparagine glycosylation is present at Asn916. A run of 4 helical transmembrane segments spans residues 921-941 (IGVY…TACF), 996-1016 (AVLQ…IIAV), 1020-1040 (YITA…TFYM), and 1105-1125 (LSLV…GIAV). Asn1132 carries an N-linked (GlcNAc...) asparagine glycan. A helical membrane pass occupies residues 1135–1155 (SLGLALVNVVSLSASVKALIT). Residues 1199–1431 (VEYKNVSAFY…PSVFRELYKS (233 aa)) enclose the ABC transporter 2 domain. Asn1203 and Asn1218 each carry an N-linked (GlcNAc...) asparagine glycan. Residue 1233-1240 (GRSGSGKS) coordinates ATP. Disordered regions lie at residues 1439-1464 (ERQE…EELR) and 1503-1557 (RTRS…RGLH). A compositionally biased stretch (basic and acidic residues) spans 1507–1522 (RSRDHSAERRESKRYS).

Belongs to the ABC transporter superfamily. ABCC family. Conjugate transporter (TC 3.A.1.208) subfamily.

It localises to the cell membrane. Its function is as follows. ABC transporter; part of the gene cluster that mediates the biosynthesis of aspercryptins, linear lipopeptides built from six amino acids including 2 highly unusual and nonproteogenic amino acids, 2-amino-octanoic acid (2aoa) and 2-amino-dodecanol (2adol). The chain is ABC transporter atnG from Emericella nidulans (strain FGSC A4 / ATCC 38163 / CBS 112.46 / NRRL 194 / M139) (Aspergillus nidulans).